The following is an 821-amino-acid chain: MKTIKSLFLLSLLIVNLLISSTYGSSIRVSIVGGEEAEVIEKPRTFGNKRELKLEYSQIYPKKQLNQENINFMSARDTFVDNLMSKMSITEKIGQMTQLDITTLTSPNTITINETTLAYYAKTYYIGSYLNSPVSGGLAGDIHHINSSVWLDMINTIQTIVIEGSPNKIPMIYGLDSVHGANYVHKATLFPHNTGLAATFNIEHATTAAQITSKDTVAVGIPWVFAPVLGIGVQPLWSRIYETFGEDPYVASMMGAAAVRGFQGGNNSFDGPINAPSAVCTAKHYFGYSDPTSGKDRTAAWIPERMLRRYFLPSFAEAITGAGAGTIMINSGEVNGVPMHTSYKYLTEVLRGELQFEGVAVTDWQDIEKLVYFHHTAGSAEEAILQALDAGIDMSMVPLDLSFPIILAEMVAAGTVPESRLDLSVRRILNLKYALGLFSNPYPNPNAAIVDTIGQVQDREAAAATAEESITLLQNKNNILPLNTNTIKNVLLTGPSADSIRNLNGGWSVHWQGAYEDSEFPFGTSILTGLREITNDTADFNIQYTIGHEIGVPTNQTSIDEAVELAQSSDVVVVVIGELPEAETPGDIYDLSMDPNEVLLLQQLVDTGKPVVLILVEARPRILPPDLVYSCAAVLMAYLPGSEGGKPIANILMGNVNPSGRLPLTYPGTTGDIGVPYYHKYSENGVTTPLFQFGDGLSYTTFNYTNLACSNCKPISGQSGNYTGVLGQSYTFTVTVTNNGNVQGKDSVLLYLSDLWAQVTPEVKMLRGFQKVDLMPAKSQQISFTLNAYEFSFIGVDNKITLESGQFIIMVGNQQLGLYLQ.

Residues 1–24 (MKTIKSLFLLSLLIVNLLISSTYG) form the signal peptide. The propeptide occupies 25-69 (SSIRVSIVGGEEAEVIEKPRTFGNKRELKLEYSQIYPKKQLNQEN). 3 N-linked (GlcNAc...) asparagine glycosylation sites follow: asparagine 113, asparagine 146, and asparagine 266. Residue aspartate 363 is part of the active site. N-linked (GlcNAc...) asparagine glycosylation is found at asparagine 535, asparagine 555, asparagine 703, and asparagine 721.

It belongs to the glycosyl hydrolase 3 family. Post-translationally, glycosylated. The polyoligosaccharides are of the high-mannose type and are highly substituted with both phosphate and sulfate moieties.

It localises to the lysosome. The catalysed reaction is Hydrolysis of terminal, non-reducing beta-D-glucosyl residues with release of beta-D-glucose.. This chain is Lysosomal beta glucosidase (gluA), found in Dictyostelium discoideum (Social amoeba).